Reading from the N-terminus, the 203-residue chain is FMN-dependent NADH:quinone oxidoreductase (203 aa).

Residues S9, 15-17 (SVS), and 139-142 (TRGG) contribute to the FMN site.

This sequence belongs to the azoreductase type 1 family. As to quaternary structure, homodimer. Requires FMN as cofactor.

It carries out the reaction 2 a quinone + NADH + H(+) = 2 a 1,4-benzosemiquinone + NAD(+). The enzyme catalyses N,N-dimethyl-1,4-phenylenediamine + anthranilate + 2 NAD(+) = 2-(4-dimethylaminophenyl)diazenylbenzoate + 2 NADH + 2 H(+). Quinone reductase that provides resistance to thiol-specific stress caused by electrophilic quinones. Its function is as follows. Also exhibits azoreductase activity. Catalyzes the reductive cleavage of the azo bond in aromatic azo compounds to the corresponding amines. This chain is FMN-dependent NADH:quinone oxidoreductase, found in Albidiferax ferrireducens (strain ATCC BAA-621 / DSM 15236 / T118) (Rhodoferax ferrireducens).